The chain runs to 357 residues: Hyaluronidase (357 aa).

An N-terminal signal peptide occupies residues 1-26 (MLLVTLFLFFLQALVNGDSCGSNCEK). 2 cysteine pairs are disulfide-bonded: cysteine 45–cysteine 334 and cysteine 211–cysteine 223. N-linked (GlcNAc...) asparagine glycans are attached at residues asparagine 105 and asparagine 125. The Proton donor role is filled by glutamate 135. N-linked (GlcNAc...) asparagine glycosylation is present at asparagine 153. N-linked (GlcNAc...) asparagine glycosylation occurs at asparagine 351.

This sequence belongs to the glycosyl hydrolase 56 family.

It is found in the secreted. The catalysed reaction is Random hydrolysis of (1-&gt;4)-linkages between N-acetyl-beta-D-glucosamine and D-glucuronate residues in hyaluronate.. Its function is as follows. Hydrolyzes high molecular weight hyaluronic acid to produce small oligosaccharides. This is Hyaluronidase from Vespa magnifica (Hornet).